Reading from the N-terminus, the 197-residue chain is Holliday junction branch migration complex subunit RuvA (197 aa).

Residues 1–63 (MYAYLKGIIT…EDAHLLYGFR (63 aa)) are domain I. The tract at residues 64 to 142 (SEDEKKLFLS…VAGDGLPAKV (79 aa)) is domain II. Residues 143-147 (AVQAS) form a flexible linker region. The interval 148–197 (AENQELEEAMEAMLALGYKATELKKIKKFFEGTTDTAENYIKSALKMLVK) is domain III.

It belongs to the RuvA family. In terms of assembly, homotetramer. Forms an RuvA(8)-RuvB(12)-Holliday junction (HJ) complex. HJ DNA is sandwiched between 2 RuvA tetramers; dsDNA enters through RuvA and exits via RuvB. An RuvB hexamer assembles on each DNA strand where it exits the tetramer. Each RuvB hexamer is contacted by two RuvA subunits (via domain III) on 2 adjacent RuvB subunits; this complex drives branch migration. In the full resolvosome a probable DNA-RuvA(4)-RuvB(12)-RuvC(2) complex forms which resolves the HJ.

It localises to the cytoplasm. Functionally, the RuvA-RuvB-RuvC complex processes Holliday junction (HJ) DNA during genetic recombination and DNA repair, while the RuvA-RuvB complex plays an important role in the rescue of blocked DNA replication forks via replication fork reversal (RFR). RuvA specifically binds to HJ cruciform DNA, conferring on it an open structure. The RuvB hexamer acts as an ATP-dependent pump, pulling dsDNA into and through the RuvAB complex. HJ branch migration allows RuvC to scan DNA until it finds its consensus sequence, where it cleaves and resolves the cruciform DNA. In Streptococcus pneumoniae serotype 2 (strain D39 / NCTC 7466), this protein is Holliday junction branch migration complex subunit RuvA.